Consider the following 120-residue polypeptide: Large ribosomal subunit protein uL22 (120 aa).

The disordered stretch occupies residues 1 to 20 (MFVNRRYTARGKNLPSSPKK).

It belongs to the universal ribosomal protein uL22 family. In terms of assembly, part of the 50S ribosomal subunit.

In terms of biological role, this protein binds specifically to 23S rRNA; its binding is stimulated by other ribosomal proteins, e.g. L4, L17, and L20. It is important during the early stages of 50S assembly. It makes multiple contacts with different domains of the 23S rRNA in the assembled 50S subunit and ribosome. The globular domain of the protein is located near the polypeptide exit tunnel on the outside of the subunit, while an extended beta-hairpin is found that lines the wall of the exit tunnel in the center of the 70S ribosome. In Borrelia hermsii (strain HS1 / DAH), this protein is Large ribosomal subunit protein uL22.